A 208-amino-acid polypeptide reads, in one-letter code: Small ribosomal subunit protein uS4 (208 aa).

One can recognise an S4 RNA-binding domain in the interval 98 to 161; it reads RRLDNVIYRL…RKIPVIAEAQ (64 aa).

This sequence belongs to the universal ribosomal protein uS4 family. In terms of assembly, part of the 30S ribosomal subunit. Contacts protein S5. The interaction surface between S4 and S5 is involved in control of translational fidelity.

One of the primary rRNA binding proteins, it binds directly to 16S rRNA where it nucleates assembly of the body of the 30S subunit. Its function is as follows. With S5 and S12 plays an important role in translational accuracy. The sequence is that of Small ribosomal subunit protein uS4 from Nitratidesulfovibrio vulgaris (strain DSM 19637 / Miyazaki F) (Desulfovibrio vulgaris).